Here is a 618-residue protein sequence, read N- to C-terminus: Arginine--tRNA ligase (618 aa).

Positions 113–123 (ANPIHPLHIGH) match the 'HIGH' region motif.

This sequence belongs to the class-I aminoacyl-tRNA synthetase family.

It localises to the cytoplasm. The catalysed reaction is tRNA(Arg) + L-arginine + ATP = L-arginyl-tRNA(Arg) + AMP + diphosphate. The chain is Arginine--tRNA ligase from Sulfolobus acidocaldarius (strain ATCC 33909 / DSM 639 / JCM 8929 / NBRC 15157 / NCIMB 11770).